A 196-amino-acid polypeptide reads, in one-letter code: Secreted effector protein SseB (196 aa).

Belongs to the EspA/SseB family. As to quaternary structure, may form a complex with SseC and SseD. Binds to the chaperone SseA.

It is found in the secreted. The protein resides in the cell surface. In terms of biological role, effector proteins function to alter host cell physiology and promote bacterial survival in host tissues. May act as a translocator that mediates translocation of SPI-2 T3SS effector proteins from intraphagosomal bacterial cells into the host cells. SseB is required for correct localization of SseC and SseD on the bacterial cell surface. This is Secreted effector protein SseB (sseB) from Salmonella typhimurium (strain LT2 / SGSC1412 / ATCC 700720).